The primary structure comprises 2896 residues: Hemocyanin G-type, units Oda to Odg (2896 aa).

Positions N1 to G419 are functional unit Oda. Cu cation is bound at residue H41. C47 and C57 are oxidised to a cystine. A cross-link (2'-(S-cysteinyl)-histidine (Cys-His)) is located at residues C58 to H60. Positions 60, 69, 178, 182, and 209 each coordinate Cu cation. 2 cysteine pairs are disulfide-bonded: C168–C234 and C321–C333. N386 is a glycosylation site (N-linked (GlcNAc...) asparagine). A functional unit Odb region spans residues L420–L834. H460 contacts Cu cation. A disulfide bond links C466 and C477. A cross-link (2'-(S-cysteinyl)-histidine (Cys-His)) is located at residues C478–H480. Residues H480, H489, H601, H605, and H632 each coordinate Cu cation. The cysteines at positions 591 and 657 are disulfide-linked. An N-linked (GlcNAc...) asparagine glycan is attached at N804. The tract at residues Y835–A1254 is functional unit Odc. H875 lines the Cu cation pocket. C881 and C892 form a disulfide bridge. The 2'-(S-cysteinyl)-histidine (Cys-His) cross-link spans C893 to H895. Cu cation contacts are provided by H895, H904, H1013, H1017, H1044, and H1292. C1003 and C1070 are joined by a disulfide. A functional unit Odd region spans residues N1255–E1667. A disulfide bridge connects residues C1298 and C1309. Residues C1310–H1312 constitute a cross-link (2'-(S-cysteinyl)-histidine (Cys-His)). Residues H1312, H1321, H1425, H1429, and H1456 each coordinate Cu cation. An intrachain disulfide couples C1415 to C1482. An N-linked (GlcNAc...) asparagine glycan is attached at N1496. C1571 and C1581 are oxidised to a cystine. The N-linked (GlcNAc...) asparagine glycan is linked to N1634. The functional unit Ode stretch occupies residues Y1668–L2085. H1708 serves as a coordination point for Cu cation. C1714 and C1725 are disulfide-bonded. Positions C1726–H1728 form a cross-link, 2'-(S-cysteinyl)-histidine (Cys-His). Cu cation is bound by residues H1728, H1737, H1849, H1853, and H1880. Intrachain disulfides connect C1839–C1906 and C1997–C2003. Residue N2055 is glycosylated (N-linked (GlcNAc...) asparagine). Residues N2086–D2502 form a functional unit Odf region. Residue H2126 coordinates Cu cation. Cysteines 2131 and 2141 form a disulfide. Residues C2142–H2144 constitute a cross-link (2'-(S-cysteinyl)-histidine (Cys-His)). Residues H2144 and H2153 each coordinate Cu cation. Residue N2201 is glycosylated (N-linked (GlcNAc...) asparagine). Cystine bridges form between C2252-C2319 and C2406-C2411. Residues H2262, H2266, and H2293 each coordinate Cu cation. Residues A2503–H2896 are functional unit Odg. H2543 is a binding site for Cu cation. C2549 and C2559 are joined by a disulfide. Residue N2553 is glycosylated (N-linked (GlcNAc...) asparagine). A cross-link (2'-(S-cysteinyl)-histidine (Cys-His)) is located at residues C2560–H2562. Residues H2562, H2571, H2671, H2675, and H2702 each contribute to the Cu cation site. 2 disulfides stabilise this stretch: C2661/C2728 and C2815/C2821.

The protein belongs to the tyrosinase family. Hemocyanin subfamily. Decamers of large identical subunits (350 kDa), each containing 7 globular oxygen-binding functional units: ODA, ODB, ODC, ODD, ODE, ODF, and ODG. Decamer formation requires the presence of magnesium ions. The cofactor is Cu(2+).

Hemocyanins are copper-containing oxygen carriers occurring freely dissolved in the hemolymph of many mollusks and arthropods. In Enteroctopus dofleini (North Pacific giant octopus), this protein is Hemocyanin G-type, units Oda to Odg (ODHCY).